The primary structure comprises 329 residues: Quinone-oxidoreductase QR1, chloroplastic (329 aa).

The protein belongs to the zinc-containing alcohol dehydrogenase family. Quinone oxidoreductase subfamily.

The protein localises to the plastid. It is found in the chloroplast outer membrane. It carries out the reaction 2 a quinone + NADPH + H(+) = 2 a 1,4-benzosemiquinone + NADP(+). Inhibited by dicumarol. NADPH-dependent single-electron reducing quinone reductase. Involved in haustorium initiation in parasitic plants through redox cycling of exogenous haustorium-inducing factors. Can use 9,10-phenanthrenequinone (PAQ), 1,2-naphthoquinone, 5-hydroxy-1,4-naphthoquinone (juglone) and 2,6-dimethoxy-p-benzoquinone (DMBQ) as substrates, but has no activity with menadione, diamide, 2,3-dimethoxy-5-methyl-1,4-benzoquinone or 1,4-naphthoquinone. This is Quinone-oxidoreductase QR1, chloroplastic from Triphysaria versicolor (Yellow owl's clover).